The chain runs to 182 residues: Large ribosomal subunit protein uL15 (182 aa).

The segment at 1 to 52 (MDLSSLRPAKGAVKNKKRIGRGPGSGNGTTAGKGNKGQQSRSGYTRPVSEGG) is disordered. The segment covering 21–35 (RGPGSGNGTTAGKGN) has biased composition (gly residues).

Belongs to the universal ribosomal protein uL15 family. Part of the 50S ribosomal subunit.

Binds to the 23S rRNA. This is Large ribosomal subunit protein uL15 from Chlorobium phaeobacteroides (strain BS1).